The sequence spans 226 residues: UPF0502 protein Daci_5373 (226 aa).

Belongs to the UPF0502 family.

The polypeptide is UPF0502 protein Daci_5373 (Delftia acidovorans (strain DSM 14801 / SPH-1)).